The following is a 380-amino-acid chain: Glycogenin-2 (380 aa).

UDP contacts are provided by leucine 10, tyrosine 16, and arginine 95. Residues leucine 10, tyrosine 16, arginine 95, lysine 104, aspartate 120, alanine 121, aspartate 122, asparagine 158, threonine 159, aspartate 185, aspartate 188, and glutamine 189 each contribute to the UDP-alpha-D-glucose site. The UDP site is built by aspartate 120, alanine 121, and aspartate 122. Residue aspartate 120 participates in Mn(2+) binding. Aspartate 122 is a binding site for Mn(2+). Tyrosine 230 and tyrosine 232 each carry an O-linked (Glc...) tyrosine glycan. UDP contacts are provided by histidine 249, glycine 252, and lysine 255. Histidine 249 is a binding site for Mn(2+). Residues glycine 252 and lysine 255 each coordinate UDP-alpha-D-glucose. The segment at 331 to 357 (SVDRNASQKSTAEKHDIEKPTSKPQSA) is disordered. Residues 341 to 351 (TAEKHDIEKPT) are compositionally biased toward basic and acidic residues. Tyrosine 367 is a glycosylation site (O-linked (Glc...) tyrosine).

This sequence belongs to the glycosyltransferase 8 family. Glycogenin subfamily. Interacts with glycogen synthase GSY2. It depends on Mn(2+) as a cofactor.

It localises to the cytoplasm. The protein localises to the vacuole. It carries out the reaction L-tyrosyl-[glycogenin] + UDP-alpha-D-glucose = alpha-D-glucosyl-L-tyrosyl-[glycogenin] + UDP + H(+). The catalysed reaction is [1,4-alpha-D-glucosyl](n)-L-tyrosyl-[glycogenin] + UDP-alpha-D-glucose = [1,4-alpha-D-glucosyl](n+1)-L-tyrosyl-[glycogenin] + UDP + H(+). Functionally, self-glucosylating initiator of glycogen synthesis. It catalyzes the formation of a short alpha (1,4)-glucosyl chain covalently attached via a glucose 1-O-tyrosyl linkage to internal tyrosine residues and these chains act as primers for the elongation reaction catalyzed by glycogen synthase. Capable of transferring glucosyl residues to unbound acceptors such as free oligoglucans or oligoglucan derivatives. The chain is Glycogenin-2 (GLG2) from Saccharomyces cerevisiae (strain YJM789) (Baker's yeast).